Here is a 346-residue protein sequence, read N- to C-terminus: Transposase for insertion sequence element IS1533 (346 aa).

This sequence belongs to the transposase IS1111A/IS1328/IS1533 family.

Functionally, required for the transposition of the insertion element. This chain is Transposase for insertion sequence element IS1533 (tnhA), found in Leptospira borgpetersenii.